The sequence spans 248 residues: MEQAHTQLIAQLNERILAADNTPLYIKFAETVKNAVRSGVLEHGNILPGERDLSQLTGVSRITVRKAMQALEEEGVVTRSRGYGTQINNIFEYSLKEARGFSQQVVLRGKKPDTLWVNKRVVKCPEEVAQQLAVEAGSDVFLLKRIRYVDEEAVSIEESWVPAHLIHDVDAIGISLYDYFRSQHIYPQRTRSRVSARMPDAEFQSHIQLDSKIPVLVIKQVALDQQQRPIEYSISHCRSDLYVFVCEE.

Residues 22–90 (TPLYIKFAET…RGYGTQINNI (69 aa)) form the HTH gntR-type domain. The H-T-H motif DNA-binding region spans 50–69 (ERDLSQLTGVSRITVRKAMQ).

Senses ADP-glucose (ADPG), which is the substrate for glycogen elongation, as an effector. In the presence of ADPG, GgaR becomes inactive and derepresses the yegTUV operon, leading to glycogen accumulation. In contrast, in the absence of glucose, the concentration of ADPG decreases, GgaR becomes active, and glycogen accumulation is repressed. Functionally, transcriptional regulator that regulates glycogen accumulation in response to the amount of glucose available to the cell. Acts as a repressor of the yegTUV operon, which may be involved in glycogen accumulation. The sequence is that of HTH-type transcriptional regulator GgaR from Escherichia coli O6:H1 (strain CFT073 / ATCC 700928 / UPEC).